Here is a 168-residue protein sequence, read N- to C-terminus: Putative ankyrin repeat protein RBE_1411 (168 aa).

ANK repeat units lie at residues threonine 59–lysine 88, tyrosine 98–isoleucine 127, and lysine 131–asparagine 160.

The chain is Putative ankyrin repeat protein RBE_1411 from Rickettsia bellii (strain RML369-C).